The sequence spans 187 residues: Preprocaerulein clone PXC202 (187 aa).

A propeptide spanning residues asparagine 1 to glycine 9 is cleaved from the precursor. The interval asparagine 1 to arginine 21 is disordered. Tyrosine 13 carries the post-translational modification Sulfotyrosine. Phenylalanine amide is present on phenylalanine 19. A propeptide spanning residues aspartate 23–glycine 73 is cleaved from the precursor. Position 77 is a sulfotyrosine (tyrosine 77). Position 83 is a phenylalanine amide (phenylalanine 83). Residues aspartate 87–glycine 137 constitute a propeptide that is removed on maturation. Residue tyrosine 141 is modified to Sulfotyrosine. Residue phenylalanine 147 is modified to Phenylalanine amide. Positions aspartate 151–glycine 152 are excised as a propeptide. Residue tyrosine 156 is modified to Sulfotyrosine. A Phenylalanine amide modification is found at phenylalanine 162. Positions aspartate 166–leucine 187 are excised as a propeptide.

This sequence belongs to the gastrin/cholecystokinin family. As to expression, expressed by the skin glands.

The protein localises to the secreted. The pharmacological activities of caerulein are quite similar to the physiological activities of gastrin and related peptides. This is Preprocaerulein clone PXC202 from Xenopus laevis (African clawed frog).